A 778-amino-acid polypeptide reads, in one-letter code: Jhy protein homolog (778 aa).

4 disordered regions span residues 62–271 (DRIR…PKTD), 334–408 (QYES…LDTS), 631–654 (EKGKKHKKRSSSKNTKLKGYQKRD), and 721–746 (IPKPKPSNLTHQASKEQKNPTYAGKE). The span at 118–139 (PIEDKYSDLRYDPNWKSKKEEG) shows a compositional bias: basic and acidic residues. The segment covering 223–234 (SSLSPYVKSSSS) has biased composition (low complexity). Over residues 334–344 (QYESTKSSNVP) the composition is skewed to polar residues. The span at 358–371 (SRRPAKLKIRKQCK) shows a compositional bias: basic residues. The segment covering 375 to 389 (GLKSSTTEEVTASQG) has biased composition (polar residues). Over residues 390 to 402 (NQNNPPRQQQNQN) the composition is skewed to low complexity. Over residues 633 to 650 (GKKHKKRSSSKNTKLKGY) the composition is skewed to basic residues. Residues 733 to 746 (ASKEQKNPTYAGKE) are compositionally biased toward basic and acidic residues.

Its function is as follows. Required for the normal development of cilia in brain ependymal cells lining the ventricular surfaces. This is Jhy protein homolog from Homo sapiens (Human).